Reading from the N-terminus, the 350-residue chain is Bifunctional methylenetetrahydrofolate dehydrogenase/cyclohydrolase, mitochondrial (350 aa).

Residues 1–35 constitute a mitochondrion transit peptide; sequence MAAASFITSLVTRLLRSAQSGRLHQRPFHLSAVRN. Lysine 50 carries the post-translational modification N6-acetyllysine; alternate. Residue lysine 50 forms a Glycyl lysine isopeptide (Lys-Gly) (interchain with G-Cter in SUMO2); alternate linkage. Substrate is bound by residues 84–88 and 131–133; these read YVLNK and VQL. Residues 200–202 and arginine 233 contribute to the NAD(+) site; that span reads GRS. 309-313 is a substrate binding site; sequence PGGVG.

The protein belongs to the tetrahydrofolate dehydrogenase/cyclohydrolase family. As to quaternary structure, homodimer. It depends on Mg(2+) as a cofactor.

It is found in the mitochondrion. The catalysed reaction is (6R)-5,10-methylene-5,6,7,8-tetrahydrofolate + NAD(+) = (6R)-5,10-methenyltetrahydrofolate + NADH. It catalyses the reaction (6R)-5,10-methenyltetrahydrofolate + H2O = (6R)-10-formyltetrahydrofolate + H(+). In terms of biological role, although its dehydrogenase activity is NAD-specific, it can also utilize NADP at a reduced efficiency. This chain is Bifunctional methylenetetrahydrofolate dehydrogenase/cyclohydrolase, mitochondrial (MTHFD2), found in Bos taurus (Bovine).